We begin with the raw amino-acid sequence, 457 residues long: Putative movement protein (457 aa).

3 disordered regions span residues 265 to 284 (SGSRNLGRRKPQRGRPLERS), 293 to 312 (FRSQDERVEHQGLSTDSDFE), and 345 to 457 (ARQD…PPSV). Residues 411–426 (RAGGGEIHGGSEGGGV) are compositionally biased toward gly residues. The span at 448–457 (YKQHDLPPSV) shows a compositional bias: basic and acidic residues.

The protein belongs to the tobamoviruses movement protein family.

Its function is as follows. Suppressor of viral-induced RNA silencing. The protein is Putative movement protein of Crataegus (hawthorn).